Consider the following 279-residue polypeptide: Isopentenyl-diphosphate delta-isomerase idi1 (279 aa).

Lysine 78 serves as a coordination point for substrate. Positions 82 and 93 each coordinate Mg(2+). A Nudix hydrolase domain is found at 91–249 (LLHRAFSVFL…GLKFTPWFKL (159 aa)). Substrate is bound by residues glutamine 111 and lysine 116. Residue cysteine 128 is part of the active site. Residue serine 129 coordinates substrate. The Nudix box signature appears at 129–162 (SHPLGIPGETGAELDAAVLGVKRAAQRKLDQELG). Positions 191 and 193 each coordinate Mg(2+). The active site involves glutamate 193.

The protein belongs to the IPP isomerase type 1 family. It depends on Mg(2+) as a cofactor.

The catalysed reaction is isopentenyl diphosphate = dimethylallyl diphosphate. It functions in the pathway isoprenoid biosynthesis; dimethylallyl diphosphate biosynthesis; dimethylallyl diphosphate from isopentenyl diphosphate: step 1/1. Isopentenyl-diphosphate delta-isomerase; part of the second module of ergosterol biosynthesis pathway that includes the middle steps of the pathway. Idi1 catalyzes the 1,3-allylic rearrangement of isopentenyl (IPP) to its highly electrophilic allylic isomer, dimethylallyl diphosphate (DMAPP). The second module is carried out in the vacuole and involves the formation of farnesyl diphosphate, which is also an important intermediate in the biosynthesis of ubiquinone, dolichol, heme and prenylated proteins. Activity by the mevalonate kinase erg12 (AFUA_4G07780) first converts mevalonate into 5-phosphomevalonate. 5-phosphomevalonate is then further converted to 5-diphosphomevalonate by the phosphomevalonate kinase erg8 (AFUA_5G10680). The diphosphomevalonate decarboxylase mvd1 (AFUA_4G07130) then produces isopentenyl diphosphate. The isopentenyl-diphosphate delta-isomerase idi1 (AFUA_6G11160) then catalyzes the 1,3-allylic rearrangement of the homoallylic substrate isopentenyl (IPP) to its highly electrophilic allylic isomer, dimethylallyl diphosphate (DMAPP). Finally the farnesyl diphosphate synthase erg20 (AFUA_5G02450) catalyzes the sequential condensation of isopentenyl pyrophosphate with dimethylallyl pyrophosphate, and then with the resultant geranylpyrophosphate to the ultimate product farnesyl pyrophosphate. This is Isopentenyl-diphosphate delta-isomerase idi1 from Aspergillus fumigatus (strain ATCC MYA-4609 / CBS 101355 / FGSC A1100 / Af293) (Neosartorya fumigata).